The primary structure comprises 199 residues: Recombination protein RecR (199 aa).

The C4-type zinc-finger motif lies at 56 to 71 (CSICFNWSAEDPCEIC). One can recognise a Toprim domain in the interval 79–174 (SLWCVVADVK…TLRMTRLAFG (96 aa)).

It belongs to the RecR family.

Functionally, may play a role in DNA repair. It seems to be involved in an RecBC-independent recombinational process of DNA repair. It may act with RecF and RecO. This chain is Recombination protein RecR, found in Synechococcus sp. (strain JA-2-3B'a(2-13)) (Cyanobacteria bacterium Yellowstone B-Prime).